The following is a 507-amino-acid chain: Pyridoxine 4-oxidase (507 aa).

His448 acts as the Proton acceptor in catalysis.

It belongs to the GMC oxidoreductase family. In terms of assembly, monomer. The cofactor is FAD.

It catalyses the reaction pyridoxine + O2 = pyridoxal + H2O2. Its pathway is cofactor degradation; B6 vitamer degradation; pyridoxal from pyridoxine (oxidase route): step 1/1. The sequence is that of Pyridoxine 4-oxidase (pno) from Microbacterium luteolum (Aureobacterium luteolum).